Here is a 126-residue protein sequence, read N- to C-terminus: Small ribosomal subunit protein uS12 (126 aa).

A disordered region spans residues 1-28 (MPTINQLVRKGRQSETTKSKSPALQDCP). The residue at position 89 (Asp-89) is a 3-methylthioaspartic acid. Positions 103–126 (DTQGVKDRKQARSKYGAKRAKAGK) are disordered. Residues 113 to 126 (ARSKYGAKRAKAGK) show a composition bias toward basic residues.

It belongs to the universal ribosomal protein uS12 family. As to quaternary structure, part of the 30S ribosomal subunit. Contacts proteins S8 and S17. May interact with IF1 in the 30S initiation complex.

With S4 and S5 plays an important role in translational accuracy. Functionally, interacts with and stabilizes bases of the 16S rRNA that are involved in tRNA selection in the A site and with the mRNA backbone. Located at the interface of the 30S and 50S subunits, it traverses the body of the 30S subunit contacting proteins on the other side and probably holding the rRNA structure together. The combined cluster of proteins S8, S12 and S17 appears to hold together the shoulder and platform of the 30S subunit. The chain is Small ribosomal subunit protein uS12 from Paraburkholderia phytofirmans (strain DSM 17436 / LMG 22146 / PsJN) (Burkholderia phytofirmans).